A 426-amino-acid polypeptide reads, in one-letter code: Glutamate-1-semialdehyde 2,1-aminomutase (426 aa).

Lys-265 bears the N6-(pyridoxal phosphate)lysine mark.

Belongs to the class-III pyridoxal-phosphate-dependent aminotransferase family. HemL subfamily. Homodimer. Requires pyridoxal 5'-phosphate as cofactor.

It localises to the cytoplasm. The enzyme catalyses (S)-4-amino-5-oxopentanoate = 5-aminolevulinate. It participates in porphyrin-containing compound metabolism; protoporphyrin-IX biosynthesis; 5-aminolevulinate from L-glutamyl-tRNA(Glu): step 2/2. The polypeptide is Glutamate-1-semialdehyde 2,1-aminomutase (Sodalis glossinidius (strain morsitans)).